The following is a 265-amino-acid chain: HUWE1-associated protein modifying stress responses (265 aa).

Disordered regions lie at residues 1–22 (MEEK…HWFS), 140–173 (GKAP…SVET), and 194–219 (ISMR…RRNG). Residues 147-172 (SSRAPPRLAMVSPSRSTPSETSSSVE) are compositionally biased toward low complexity.

This sequence belongs to the HAPSTR1 family. Oligomer.

It localises to the nucleus. The protein resides in the cytoplasm. Functionally, acts as a central player within a network of stress response pathways promoting cellular adaptability. Functions as a negative regulator of TP53/P53 in the cellular response to telomere erosion and probably also DNA damage. The protein is HUWE1-associated protein modifying stress responses of Danio rerio (Zebrafish).